A 299-amino-acid polypeptide reads, in one-letter code: RING-H2 finger protein ATL20 (299 aa).

Residues 172–192 (LIITLCIIGGITATCIAAIRI) form a helical membrane-spanning segment. The RING-type; atypical zinc finger occupies 253 to 295 (CPICLSEYASKETVRCMPECDHCFHVQCIDEWLKIHSSCPVCR).

This sequence belongs to the RING-type zinc finger family. ATL subfamily.

It is found in the membrane. It catalyses the reaction S-ubiquitinyl-[E2 ubiquitin-conjugating enzyme]-L-cysteine + [acceptor protein]-L-lysine = [E2 ubiquitin-conjugating enzyme]-L-cysteine + N(6)-ubiquitinyl-[acceptor protein]-L-lysine.. It functions in the pathway protein modification; protein ubiquitination. The protein is RING-H2 finger protein ATL20 (ATL20) of Arabidopsis thaliana (Mouse-ear cress).